Reading from the N-terminus, the 487-residue chain is L-tartrate/succinate antiporter (487 aa).

Helical transmembrane passes span 10 to 30 (YLAP…AGLE), 33 to 53 (TWLY…EPVP), 54 to 74 (GAVV…WLLF), 93 to 113 (WAVF…FMFG), 137 to 157 (TLFL…VTPS), 189 to 209 (IGSY…AIFL), 236 to 256 (FLGM…LAYV), 292 to 312 (LMVG…AAMV), 313 to 333 (GYSV…DIVS), 340 to 360 (VFFW…TGFI), 370 to 390 (SLSG…FYLL), 393 to 413 (FFAS…AAAL), 418 to 438 (IPLP…SILT), and 465 to 485 (IFGL…MPVV).

This sequence belongs to the SLC13A/DASS transporter (TC 2.A.47) family. DIT1 subfamily.

Its subcellular location is the cell inner membrane. It carries out the reaction (2R,3R)-tartrate(out) + succinate(in) = (2R,3R)-tartrate(in) + succinate(out). Its function is as follows. Catalyzes the uptake of tartrate in exchange for intracellular succinate. Essential for anaerobic L-tartrate fermentation. This chain is L-tartrate/succinate antiporter (ttdT), found in Shigella boydii serotype 4 (strain Sb227).